A 1054-amino-acid polypeptide reads, in one-letter code: Filament-like plant protein 6 (1054 aa).

3 coiled-coil regions span residues 64 to 139, 174 to 200, and 250 to 341; these read VQIK…VKQH, AEDRAAHLDGALKECMRQIRNLKKDHE, and SNML…RKKL. 2 disordered regions span residues 359–390 and 448–506; these read RDSGDARQKRSPVKVSSPCKSPGGYSSTGSEF and EAQL…KEKD. 3 stretches are compositionally biased toward low complexity: residues 371-380, 450-461, and 470-494; these read VKVSSPCKSP, QLQQNNSQKSSL, and SNPSSSISVSEDGNDDSGSCSGSLS. Residues 389–463 are a coiled coil; sequence EFSLDNAQKF…NNSQKSSLEV (75 aa). Coiled-coil stretches lie at residues 637 to 666 and 788 to 944; these read QNLVEDCHLAEQKLQSIHQDLKNAVSRIHD and ESDS…IFVL. A disordered region spans residues 951 to 1054; the sequence is FRPQPEQMRS…SRFFSSKSGY (104 aa). The segment covering 1007 to 1032 has biased composition (low complexity); that stretch reads PSDSETSDTTTSPSRVGSRLSRSGSS.

Belongs to the FPP family. As to quaternary structure, interacts with WPP/MAF proteins.

In Arabidopsis thaliana (Mouse-ear cress), this protein is Filament-like plant protein 6 (FPP6).